The primary structure comprises 41 residues: Phospholipase A2 homolog nigroviriditoxin acidic subunit A (41 aa).

It belongs to the phospholipase A2 family. Group II subfamily. D49 sub-subfamily. Nigroviriditoxin is a heterodimer of an acidic subunit A and a basic subunit B. As to expression, expressed by the venom gland.

It localises to the secreted. Heterodimer A-B: Nigroviriditoxin possesses phospholipase A2 (PLA2) activity. It consists of a non-covalent association of a basic PLA2 subunit B with a non-enzymatic subunit A. In terms of biological role, subunit A: The acidic subunit of nigroviriditoxin probably is a heterotrimer of three disulfide-linked chains generated by post-translational maturation of a PLA2-like precursor. It appears to have no PLA2 activity of its own, instead inhibiting the catalytic activity of subunit B. It is not toxic to mice by itself but increases toxicity of subunit B. The chain is Phospholipase A2 homolog nigroviriditoxin acidic subunit A from Bothriechis nigroviridis (Black-speckled palm pit viper).